Consider the following 264-residue polypeptide: Alkaline ceramidase 1 (264 aa).

The Lumenal segment spans residues 1–27 (MPSIFAYQSSEVDWCESNFQYSELVAE). Positions 13, 14, 16, 18, and 27 each coordinate Ca(2+). A helical membrane pass occupies residues 28-48 (FYNTFSNIPFFIFGPLMMLLM). Residues 49–57 (HPYAQKRSR) lie on the Cytoplasmic side of the membrane. The chain crosses the membrane as a helical span at residues 58–78 (YIYVVWVLFMIIGLFSMYFHM). Residue His-77 participates in Zn(2+) binding. Residues 79–81 (TLS) lie on the Lumenal side of the membrane. Residues 82–102 (FLGQLLDEIAILWLLGSGYSI) form a helical membrane-spanning segment. The Cytoplasmic segment spans residues 103-119 (WMPRCYFPSFLGGNRSQ). A helical transmembrane segment spans residues 120–137 (FIRLVFITTVVSTLLSFL). A topological domain (lumenal) is located at residue Arg-138. The chain crosses the membrane as a helical span at residues 139 to 159 (PTVNAYALNSIALHILYIVCQ). At 160 to 176 (EYRKTSNKELRHLIEVS) the chain is on the cytoplasmic side. The chain crosses the membrane as a helical span at residues 177–197 (VVLWAVALTSWISDRLLCSFW). Residues 198–206 (QRIHFFYLH) are Lumenal-facing. Zn(2+) is bound by residues His-206 and His-210. Residues 207–227 (SIWHVLISITFPYGMVTMALV) form a helical membrane-spanning segment. At 228–264 (DANYEMPGETLKVRYWPRDSWPVGLPYVEIRGDDKDC) the chain is on the cytoplasmic side.

The protein belongs to the alkaline ceramidase family. Zn(2+) serves as cofactor. In terms of tissue distribution, mainly expressed in epidermis.

The protein resides in the endoplasmic reticulum membrane. The enzyme catalyses an N-acylsphing-4-enine + H2O = sphing-4-enine + a fatty acid. It catalyses the reaction N-tetracosanoyl-sphing-4-enine + H2O = tetracosanoate + sphing-4-enine. The catalysed reaction is an N-acylsphinganine + H2O = sphinganine + a fatty acid. It carries out the reaction N-(9Z-octadecenoyl)-sphing-4-enine + H2O = sphing-4-enine + (9Z)-octadecenoate. The enzyme catalyses N-(15Z-tetracosenoyl)-sphing-4-enine + H2O = (15Z)-tetracosenoate + sphing-4-enine. The protein operates within lipid metabolism; sphingolipid metabolism. Inhibited by sphingosine. Activity is Ca(2+)-dependent. In terms of biological role, endoplasmic reticulum ceramidase that catalyzes the hydrolysis of ceramides into sphingosine and free fatty acids at alkaline pH. Ceramides, sphingosine, and its phosphorylated form sphingosine-1-phosphate are bioactive lipids that mediate cellular signaling pathways regulating several biological processes including cell proliferation, apoptosis and differentiation. Exhibits a strong substrate specificity towards the natural stereoisomer of ceramides with D-erythro-sphingosine as a backbone and has a higher activity towards very long-chain unsaturated fatty acids like the C24:1-ceramide. May also hydrolyze dihydroceramides to produce dihydrosphingosine. ACER1 is a skin-specific ceramidase that regulates the levels of ceramides, sphingosine and sphingosine-1-phosphate in the epidermis, mediates the calcium-induced differentiation of epidermal keratinocytes and more generally plays an important role in skin homeostasis. This Homo sapiens (Human) protein is Alkaline ceramidase 1.